Consider the following 349-residue polypeptide: ATP synthase subunit a-2 (349 aa).

Positions 1–97 (MERLTRLNHF…SNYMKLMEIP (97 aa)) are excised as a propeptide. Transmembrane regions (helical) follow at residues 118–138 (FSFT…LLLI), 184–204 (FFPC…QGMI), 213–233 (HFLI…IVGF), 240–260 (FFSF…LVLL), 280–300 (MMAG…MLCM), 303–323 (IFYF…TGLE), and 326–346 (VAIL…NDAI).

Belongs to the ATPase A chain family. As to quaternary structure, F-type ATPases have 2 components, CF(1) - the catalytic core - and CF(0) - the membrane proton channel. CF(1) has five subunits: alpha(3), beta(3), gamma(1), delta(1), epsilon(1). CF(0) has three main subunits: a, b and c.

It localises to the mitochondrion inner membrane. Mitochondrial membrane ATP synthase (F(1)F(0) ATP synthase or Complex V) produces ATP from ADP in the presence of a proton gradient across the membrane which is generated by electron transport complexes of the respiratory chain. F-type ATPases consist of two structural domains, F(1) - containing the extramembraneous catalytic core and F(0) - containing the membrane proton channel, linked together by a central stalk and a peripheral stalk. During catalysis, ATP synthesis in the catalytic domain of F(1) is coupled via a rotary mechanism of the central stalk subunits to proton translocation. Key component of the proton channel; it may play a direct role in the translocation of protons across the membrane. This Arabidopsis thaliana (Mouse-ear cress) protein is ATP synthase subunit a-2 (ATP6-2).